Reading from the N-terminus, the 184-residue chain is MNNLLAVIELLKQNQVVAYPTESVFGLGCNPNNEEAIRQLLQLKNRPIEKGLILVAPTKELLLPYIDESQLTEKHWQRFDTITEQAVTWIMPVHKNVSHYLTGKFNTIAVRLCRVPAVVKLCESLGFALTSTSANFTGLPPCRTALEVKQQFGDHFPVLEAETGNRMNPSEIRDIFTQHIFRQG.

Residues 1–184 (MNNLLAVIEL…IFTQHIFRQG (184 aa)) enclose the YrdC-like domain.

Belongs to the SUA5 family. TsaC subfamily.

The protein resides in the cytoplasm. The catalysed reaction is L-threonine + hydrogencarbonate + ATP = L-threonylcarbamoyladenylate + diphosphate + H2O. Functionally, required for the formation of a threonylcarbamoyl group on adenosine at position 37 (t(6)A37) in tRNAs that read codons beginning with adenine. Catalyzes the conversion of L-threonine, HCO(3)(-)/CO(2) and ATP to give threonylcarbamoyl-AMP (TC-AMP) as the acyladenylate intermediate, with the release of diphosphate. The sequence is that of Threonylcarbamoyl-AMP synthase from Haemophilus ducreyi (strain 35000HP / ATCC 700724).